A 570-amino-acid polypeptide reads, in one-letter code: Sulfite reductase [NADPH] hemoprotein beta-component (570 aa).

[4Fe-4S] cluster is bound by residues Cys-434, Cys-440, Cys-479, and Cys-483. Cys-483 lines the siroheme pocket.

Belongs to the nitrite and sulfite reductase 4Fe-4S domain family. In terms of assembly, alpha(8)-beta(8). The alpha component is a flavoprotein, the beta component is a hemoprotein. Siroheme serves as cofactor. Requires [4Fe-4S] cluster as cofactor.

The enzyme catalyses hydrogen sulfide + 3 NADP(+) + 3 H2O = sulfite + 3 NADPH + 4 H(+). The protein operates within sulfur metabolism; hydrogen sulfide biosynthesis; hydrogen sulfide from sulfite (NADPH route): step 1/1. In terms of biological role, component of the sulfite reductase complex that catalyzes the 6-electron reduction of sulfite to sulfide. This is one of several activities required for the biosynthesis of L-cysteine from sulfate. The sequence is that of Sulfite reductase [NADPH] hemoprotein beta-component (cysI) from Escherichia coli (strain K12).